Consider the following 521-residue polypeptide: Importin subunit alpha-3 (521 aa).

Residue A2 is modified to N-acetylalanine. The IBB domain occupies 2–58 (ADNEKLDNQRLKNFKNKGRDLETMRRQRNEVVVELRKNKRDEHLLKRRNVPQEDICE). The Nuclear localization signal signature appears at 43 to 52 (EHLLKRRNVP). S60 carries the phosphoserine modification. The ARM 1; truncated repeat unit spans residues 66-106 (YRVQNTSLEAIVQNASSDNQGIQLSAVQAARKLLSSDRNPP). 8 ARM repeats span residues 107–149 (IDDL…TSEQ), 150–194 (TQAV…CRDY), 195–233 (VISL…HKDP), 234–278 (PPPM…EQIQ), 279–318 (MVID…TDEQ), 319–360 (TQVV…NQQQ), 361–400 (VQAV…ISGR), and 401–443 (KDQV…KMAE). Residues 137–229 (WALTNIASGT…VTWVMVNLCR (93 aa)) are NLS binding site (major). The NLS binding site (minor) stretch occupies residues 306–394 (RAVGNIVTGT…QKEAAWAISN (89 aa)). The ARM 10; atypical repeat unit spans residues 447 to 485 (ETIANLIEECGGLEKIEQLQNHENEDIYKLAYEIIDQFF).

The protein belongs to the importin alpha family. In terms of assembly, forms a complex with importin subunit beta-1 (KPNB1). Interacts with SNAI1. Interacts with TALDO1 isoform 1. Interacts with CYB1. As to expression, detected more or less in all tissues examined (Ehrlich ascites tumor cells, testis, kidney, spleen, liver, heart, lung, thymus, skeletal muscle, cerebellum and brain (without cerebellum)). Multiple-sized transcripts were highly expressed, especially in testis.

Its subcellular location is the cytoplasm. It is found in the nucleus. Its function is as follows. Functions in nuclear protein import as an adapter protein for nuclear receptor KPNB1. Binds specifically and directly to substrates containing either a simple or bipartite NLS motif. Docking of the importin/substrate complex to the nuclear pore complex (NPC) is mediated by KPNB1 through binding to nucleoporin FxFG repeats and the complex is subsequently translocated through the pore by an energy requiring, Ran-dependent mechanism. At the nucleoplasmic side of the NPC, Ran binds to importin-beta and the three components separate and importin-alpha and -beta are re-exported from the nucleus to the cytoplasm where GTP hydrolysis releases Ran from importin. The directionality of nuclear import is thought to be conferred by an asymmetric distribution of the GTP- and GDP-bound forms of Ran between the cytoplasm and nucleus. Mediates nuclear import of AARS1, MRTFA and RANBP3. The sequence is that of Importin subunit alpha-3 (Kpna4) from Mus musculus (Mouse).